Reading from the N-terminus, the 212-residue chain is Leucyl/phenylalanyl-tRNA--protein transferase (212 aa).

This sequence belongs to the L/F-transferase family.

Its subcellular location is the cytoplasm. It catalyses the reaction N-terminal L-lysyl-[protein] + L-leucyl-tRNA(Leu) = N-terminal L-leucyl-L-lysyl-[protein] + tRNA(Leu) + H(+). The catalysed reaction is N-terminal L-arginyl-[protein] + L-leucyl-tRNA(Leu) = N-terminal L-leucyl-L-arginyl-[protein] + tRNA(Leu) + H(+). It carries out the reaction L-phenylalanyl-tRNA(Phe) + an N-terminal L-alpha-aminoacyl-[protein] = an N-terminal L-phenylalanyl-L-alpha-aminoacyl-[protein] + tRNA(Phe). Functionally, functions in the N-end rule pathway of protein degradation where it conjugates Leu, Phe and, less efficiently, Met from aminoacyl-tRNAs to the N-termini of proteins containing an N-terminal arginine or lysine. This is Leucyl/phenylalanyl-tRNA--protein transferase from Jannaschia sp. (strain CCS1).